Here is a 151-residue protein sequence, read N- to C-terminus: UPF0756 membrane protein Moth_0120 (151 aa).

The next 4 membrane-spanning stretches (helical) occupy residues 6-26, 52-72, 75-95, and 111-131; these read VILI…IAAA, AGLI…RVAP, MLQS…IIAT, and MMIG…GIPV.

Belongs to the UPF0756 family.

The protein localises to the cell membrane. This Moorella thermoacetica (strain ATCC 39073 / JCM 9320) protein is UPF0756 membrane protein Moth_0120.